The chain runs to 394 residues: MEMTEASKHTTTHEESEHVQNPEPDQVLSQRQLLQLNQKKWWISVLICLFLVLLGDSLVILLLNFFYVQDRREDNNQDLQYKGTWMQALIQNAAFPILIPLFFIFPSPKPNPETINTRFLSIRLILLYFSLGVLVAAHSKLYALGKLYSSYGFFMLISGSQLIFTLIFTAIINRFKFTRWIIISIVLILVSYAFGGPVFSGEPDENEHFYGIQAWLTFAASVAFALSLCLVQLSFEKLLVKTKRYGNKKVFRMVLEMQICVSSVASVVCLVGLFASGEYKELKGDSERFKKGETYYVLSLVGLALSWQVWAVGLIGLVLYVSSVFSNIVHMCASPLMAFIVVLAFDFIDDDFSWPRIGALIGSVLALGSYFYTLHKRNKKKMVEFNQSENNVEV.

Over residues 1–20 the composition is skewed to basic and acidic residues; it reads MEMTEASKHTTTHEESEHVQ. Residues 1–24 form a disordered region; it reads MEMTEASKHTTTHEESEHVQNPEP. A Phosphoserine modification is found at S29. 10 consecutive transmembrane segments (helical) span residues 43–63, 85–105, 124–144, 152–172, 180–200, 211–231, 254–274, 301–321, 328–348, and 352–372; these read ISVL…ILLL, WMQA…FFIF, LILL…LYAL, GFFM…TAII, WIII…PVFS, GIQA…LCLV, VLEM…VGLF, VGLA…VLYV, IVHM…FDFI, and FSWP…SYFY.

This sequence belongs to the purine permeases (TC 2.A.7.14) family.

The protein resides in the membrane. This chain is Probable purine permease 23 (PUP23), found in Arabidopsis thaliana (Mouse-ear cress).